A 392-amino-acid polypeptide reads, in one-letter code: Phosphoglycerate kinase (392 aa).

Substrate contacts are provided by residues 21–23 (DFN), arginine 36, 59–62 (HLGR), arginine 118, and arginine 151. ATP contacts are provided by residues lysine 201, glycine 292, glutamate 323, and 349 to 352 (GGDS).

Belongs to the phosphoglycerate kinase family. Monomer.

It is found in the cytoplasm. It catalyses the reaction (2R)-3-phosphoglycerate + ATP = (2R)-3-phospho-glyceroyl phosphate + ADP. The protein operates within carbohydrate degradation; glycolysis; pyruvate from D-glyceraldehyde 3-phosphate: step 2/5. The polypeptide is Phosphoglycerate kinase (Borrelia duttonii (strain Ly)).